The following is a 92-amino-acid chain: Large ribosomal subunit protein bL27 (92 aa).

A disordered region spans residues 1-20 (MAHKKAGGSTRNGRDSNPKY).

This sequence belongs to the bacterial ribosomal protein bL27 family.

This Legionella pneumophila (strain Paris) protein is Large ribosomal subunit protein bL27.